The chain runs to 194 residues: ATP-dependent Clp protease proteolytic subunit (194 aa).

Serine 97 serves as the catalytic Nucleophile. Histidine 122 is a catalytic residue.

Belongs to the peptidase S14 family. In terms of assembly, fourteen ClpP subunits assemble into 2 heptameric rings which stack back to back to give a disk-like structure with a central cavity, resembling the structure of eukaryotic proteasomes.

The protein resides in the cytoplasm. The catalysed reaction is Hydrolysis of proteins to small peptides in the presence of ATP and magnesium. alpha-casein is the usual test substrate. In the absence of ATP, only oligopeptides shorter than five residues are hydrolyzed (such as succinyl-Leu-Tyr-|-NHMec, and Leu-Tyr-Leu-|-Tyr-Trp, in which cleavage of the -Tyr-|-Leu- and -Tyr-|-Trp bonds also occurs).. Cleaves peptides in various proteins in a process that requires ATP hydrolysis. Has a chymotrypsin-like activity. Plays a major role in the degradation of misfolded proteins. The sequence is that of ATP-dependent Clp protease proteolytic subunit from Thermus thermophilus (strain ATCC BAA-163 / DSM 7039 / HB27).